The following is a 172-amino-acid chain: Acetolactate synthase small subunit (172 aa).

In terms of domain architecture, ACT spans 4–78 (TLSVLVEDEA…NVIKVQDITE (75 aa)).

The protein belongs to the acetolactate synthase small subunit family. Dimer of large and small chains.

The catalysed reaction is 2 pyruvate + H(+) = (2S)-2-acetolactate + CO2. It functions in the pathway amino-acid biosynthesis; L-isoleucine biosynthesis; L-isoleucine from 2-oxobutanoate: step 1/4. The protein operates within amino-acid biosynthesis; L-valine biosynthesis; L-valine from pyruvate: step 1/4. The protein is Acetolactate synthase small subunit (ilvH) of Synechocystis sp. (strain ATCC 27184 / PCC 6803 / Kazusa).